The primary structure comprises 161 residues: DNA-directed RNA polymerase III subunit RPC9 (161 aa).

The segment at 75–96 (QEDEGEERESSGAKDAEKSGIS) is disordered. Over residues 82 to 96 (RESSGAKDAEKSGIS) the composition is skewed to basic and acidic residues.

Belongs to the eukaryotic RPC9 RNA polymerase subunit family. Component of the RNA polymerase III (Pol III) complex consisting of 17 subunits. Forms a Pol III subcomplex with RPC25/RPC8. Interacts with BURF1/TDS4.

It is found in the nucleus. In terms of biological role, DNA-dependent RNA polymerase catalyzes the transcription of DNA into RNA using the four ribonucleoside triphosphates as substrates. Specific peripheric component of RNA polymerase III which synthesizes small RNAs, such as 5S rRNA and tRNAs. The RPC25/RPC8-RPC17/RPC9 subcomplex may bind Pol III transcripts emerging from the adjacent exit pore during elongation. The protein is DNA-directed RNA polymerase III subunit RPC9 (RPC17) of Saccharomyces cerevisiae (strain ATCC 204508 / S288c) (Baker's yeast).